Reading from the N-terminus, the 116-residue chain is Flagellar transcriptional regulator FlhD (116 aa).

The protein belongs to the FlhD family. In terms of assembly, homodimer; disulfide-linked. Forms a heterohexamer composed of two FlhC and four FlhD subunits. Each FlhC binds a FlhD dimer, forming a heterotrimer, and a hexamer assembles by dimerization of two heterotrimers.

It is found in the cytoplasm. In terms of biological role, functions in complex with FlhC as a master transcriptional regulator that regulates transcription of several flagellar and non-flagellar operons by binding to their promoter region. Activates expression of class 2 flagellar genes, including fliA, which is a flagellum-specific sigma factor that turns on the class 3 genes. Also regulates genes whose products function in a variety of physiological pathways. The polypeptide is Flagellar transcriptional regulator FlhD (Yersinia pseudotuberculosis serotype O:1b (strain IP 31758)).